A 155-amino-acid chain; its full sequence is Small ribosomal subunit protein eS19 (155 aa).

Belongs to the eukaryotic ribosomal protein eS19 family. Component of the small ribosomal subunit.

It localises to the cytoplasm. In terms of biological role, component of the small ribosomal subunit. The ribosome is a large ribonucleoprotein complex responsible for the synthesis of proteins in the cell. Required for proper maturation of the small (40S) ribosomal subunit. In Entamoeba histolytica (strain ATCC 30459 / HM-1:IMSS / ABRM), this protein is Small ribosomal subunit protein eS19 (RPS19).